A 302-amino-acid chain; its full sequence is Dihydroorotate dehydrogenase B (NAD(+)), catalytic subunit (302 aa).

FMN contacts are provided by residues Ser20 and 44–45; that span reads KG. Residues Lys44 and 68–72 each bind substrate; that span reads NSVGL. FMN is bound by residues Asn98 and Asn125. Position 125 (Asn125) interacts with substrate. Cys128 serves as the catalytic Nucleophile. 2 residues coordinate FMN: Lys163 and Ile189. Residue 190-191 coordinates substrate; the sequence is NT. FMN-binding positions include Gly215, 241-242, and 263-264; these read GG and GT.

The protein belongs to the dihydroorotate dehydrogenase family. Type 1 subfamily. Heterotetramer of 2 PyrK and 2 PyrD type B subunits. The cofactor is FMN.

The protein resides in the cytoplasm. The catalysed reaction is (S)-dihydroorotate + NAD(+) = orotate + NADH + H(+). It participates in pyrimidine metabolism; UMP biosynthesis via de novo pathway; orotate from (S)-dihydroorotate (NAD(+) route): step 1/1. Functionally, catalyzes the conversion of dihydroorotate to orotate with NAD(+) as electron acceptor. This chain is Dihydroorotate dehydrogenase B (NAD(+)), catalytic subunit (pyrD), found in Thermoanaerobacter sp. (strain X514).